A 226-amino-acid chain; its full sequence is LexA repressor (226 aa).

A DNA-binding region (H-T-H motif) is located at residues R28–R48. Catalysis depends on for autocatalytic cleavage activity residues S133 and K170.

It belongs to the peptidase S24 family. As to quaternary structure, homodimer.

It carries out the reaction Hydrolysis of Ala-|-Gly bond in repressor LexA.. Represses a number of genes involved in the response to DNA damage (SOS response), including recA and lexA. In the presence of single-stranded DNA, RecA interacts with LexA causing an autocatalytic cleavage which disrupts the DNA-binding part of LexA, leading to derepression of the SOS regulon and eventually DNA repair. This chain is LexA repressor, found in Halorhodospira halophila (strain DSM 244 / SL1) (Ectothiorhodospira halophila (strain DSM 244 / SL1)).